A 525-amino-acid polypeptide reads, in one-letter code: Mitoguardin (525 aa).

Residues 26–45 form a helical membrane-spanning segment; sequence VVLFSLTAGVALMSVLSRFL. Residues 47–67 are compositionally biased toward basic residues; it reads RRKPPRPPRRARKYTGRRNRN. 2 disordered regions span residues 47 to 73 and 210 to 239; these read RRKP…RSPN and DEAE…GSDP. Over residues 211-220 the composition is skewed to acidic residues; that stretch reads EAEEEAGEAD.

It belongs to the mitoguardin family. Interacts with zuc.

It localises to the mitochondrion outer membrane. Its function is as follows. Regulator of mitochondrial fusion required to maintain neuronal homeostasis. The protein is Mitoguardin of Drosophila melanogaster (Fruit fly).